A 767-amino-acid chain; its full sequence is Serine/threonine-protein kinase DCLK2 (767 aa).

The tract at residues 1–44 (MASTRSIELEHFEERDKRPRPGSRRGAPSSSGGSSISGPKGNGL) is disordered. Over residues 7–19 (IELEHFEERDKRP) the composition is skewed to basic and acidic residues. Residues 24–43 (RRGAPSSSGGSSISGPKGNG) show a composition bias toward low complexity. Phosphothreonine is present on threonine 61. Doublecortin domains lie at 72 to 158 (KKAR…VDYT) and 196 to 279 (KLVT…AQDD). The segment covering 301–311 (KYSGSRSPGLS) has biased composition (low complexity). Residues 301–391 (KYSGSRSPGL…GPELDRCMSP (91 aa)) form a disordered region. The segment covering 327–338 (SAYSTAKSPVNG) has biased composition (polar residues). The span at 339–362 (TPSSQLSTPKSTKSSSSSPTSPGS) shows a compositional bias: low complexity. The segment covering 369–380 (ISAQGRSSSNVN) has biased composition (polar residues). Position 377 is a phosphoserine (serine 377). The Protein kinase domain occupies 409–666 (YRIGKVIGDG…AGEILSHPWV (258 aa)). ATP-binding positions include 415–423 (IGDGNFAVV) and lysine 438. Aspartate 530 (proton acceptor) is an active-site residue. Residue serine 662 is modified to Phosphoserine. Threonine 681 carries the post-translational modification Phosphothreonine. A compositionally biased stretch (basic and acidic residues) spans 721–734 (HCRDSSKSSREQTS). The segment at 721 to 767 (HCRDSSKSSREQTSAREAPPPPESPRPPGPPATSGCDPAGTWRRHRD) is disordered. Residues 738–751 (APPPPESPRPPGPP) show a composition bias toward pro residues.

Belongs to the protein kinase superfamily. CAMK Ser/Thr protein kinase family. CaMK subfamily. As to quaternary structure, interacts with MAPK8IP1/JIP-1, MAPK8IP2/JIP-2, MAPK9/JNK2, PPP1R9B/NEURABIN-2 and actin. Binds to and stabilizes microtubules; binding affinity is strongly reduced by autophosphorylation. In terms of processing, autophosphorylated.

It is found in the cytoplasm. Its subcellular location is the cytoskeleton. The enzyme catalyses L-seryl-[protein] + ATP = O-phospho-L-seryl-[protein] + ADP + H(+). It catalyses the reaction L-threonyl-[protein] + ATP = O-phospho-L-threonyl-[protein] + ADP + H(+). Functionally, protein kinase with a significantly reduced Ca(2+)+/CAM affinity and dependence compared to other members of the CaMK family. May play a role in the down-regulation of CRE-dependent gene activation probably by phosphorylation of the CREB coactivator CRTC2/TORC2 and the resulting retention of TORC2 in the cytoplasm. The polypeptide is Serine/threonine-protein kinase DCLK2 (Dclk2) (Rattus norvegicus (Rat)).